A 447-amino-acid chain; its full sequence is N-succinylarginine dihydrolase (447 aa).

Substrate contacts are provided by residues 19 to 28 (AGLSFGNEAS), Asn110, and 137 to 138 (HR). Residue Glu174 is part of the active site. Substrate is bound at residue Arg212. His248 is an active-site residue. Residues Asp250 and Asn359 each contribute to the substrate site. The active-site Nucleophile is Cys365.

The protein belongs to the succinylarginine dihydrolase family. As to quaternary structure, homodimer.

The catalysed reaction is N(2)-succinyl-L-arginine + 2 H2O + 2 H(+) = N(2)-succinyl-L-ornithine + 2 NH4(+) + CO2. It participates in amino-acid degradation; L-arginine degradation via AST pathway; L-glutamate and succinate from L-arginine: step 2/5. Catalyzes the hydrolysis of N(2)-succinylarginine into N(2)-succinylornithine, ammonia and CO(2). The chain is N-succinylarginine dihydrolase from Escherichia coli O9:H4 (strain HS).